Here is a 288-residue protein sequence, read N- to C-terminus: Ankyrin repeat and SOCS box protein 8 (288 aa).

At S17 the chain carries Phosphoserine. ANK repeat units follow at residues 52 to 81, 85 to 113, 117 to 146, and 150 to 179; these read GTLK…EVNA, YNRT…NPNA, NRDT…SVNA, and NNDT…EVRV. One can recognise an SOCS box domain in the interval 235–288; it reads QLCEKLTVLCSAPGTLKTLARYAVRRSLGLQYLPDAVKGLPLPASLKEYLLLLE.

This sequence belongs to the ankyrin SOCS box (ASB) family. As to quaternary structure, interacts with TBK1; this interaction promotes TBK1 proteasomal degradation. In terms of processing, phosphorylated by TBK1. In terms of tissue distribution, highest level of expression in skeletal muscle. Also expressed in heart, brain, placenta, liver, kidney and pancreas.

It is found in the cytoplasm. It functions in the pathway protein modification; protein ubiquitination. Functionally, may be a substrate-recognition component of a SCF-like ECS (Elongin-Cullin-SOCS-box protein) E3 ubiquitin-protein ligase complex which mediates the ubiquitination and subsequent proteasomal degradation of target proteins. Inhibits IFN-beta production through the IRF3 signaling pathway by targeting TBK1 via 'Lys-48'-linked ubiquitination, leading to its proteasomal degradation. In Homo sapiens (Human), this protein is Ankyrin repeat and SOCS box protein 8 (ASB8).